The chain runs to 243 residues: Urease accessory protein UreF (243 aa).

This sequence belongs to the UreF family. As to quaternary structure, ureD, UreF and UreG form a complex that acts as a GTP-hydrolysis-dependent molecular chaperone, activating the urease apoprotein by helping to assemble the nickel containing metallocenter of UreC. The UreE protein probably delivers the nickel.

It localises to the cytoplasm. Required for maturation of urease via the functional incorporation of the urease nickel metallocenter. The chain is Urease accessory protein UreF from Xanthobacter autotrophicus (strain ATCC BAA-1158 / Py2).